A 106-amino-acid polypeptide reads, in one-letter code: MGKTNDWLDFDQLVEDSVRDALKPPSMYKVILVNDDYTPMEFVIDVLQKFFSYDVERATQLMFAVHYQGKAICGVFTAEVAETKVAMVNKYARENEHPLLCTLEKA.

The protein belongs to the ClpS family. Binds to the N-terminal domain of the chaperone ClpA.

In terms of biological role, involved in the modulation of the specificity of the ClpAP-mediated ATP-dependent protein degradation. The sequence is that of ATP-dependent Clp protease adapter protein ClpS from Salmonella gallinarum (strain 287/91 / NCTC 13346).